Consider the following 190-residue polypeptide: Peptidyl-tRNA hydrolase (190 aa).

Tyrosine 18 serves as a coordination point for tRNA. Histidine 23 (proton acceptor) is an active-site residue. 3 residues coordinate tRNA: phenylalanine 69, asparagine 71, and asparagine 117.

The protein belongs to the PTH family. As to quaternary structure, monomer.

It is found in the cytoplasm. It carries out the reaction an N-acyl-L-alpha-aminoacyl-tRNA + H2O = an N-acyl-L-amino acid + a tRNA + H(+). Functionally, hydrolyzes ribosome-free peptidyl-tRNAs (with 1 or more amino acids incorporated), which drop off the ribosome during protein synthesis, or as a result of ribosome stalling. Its function is as follows. Catalyzes the release of premature peptidyl moieties from peptidyl-tRNA molecules trapped in stalled 50S ribosomal subunits, and thus maintains levels of free tRNAs and 50S ribosomes. The chain is Peptidyl-tRNA hydrolase from Rhodococcus opacus (strain B4).